The primary structure comprises 403 residues: Phosphoglycerate kinase (403 aa).

Substrate-binding positions include 24-26, Arg-39, 62-65, Arg-121, and Arg-161; these read DLN and HLGR. ATP is bound by residues Lys-211, Gly-299, Glu-330, and 359–362; that span reads GGDS.

It belongs to the phosphoglycerate kinase family. Monomer.

The protein resides in the cytoplasm. It catalyses the reaction (2R)-3-phosphoglycerate + ATP = (2R)-3-phospho-glyceroyl phosphate + ADP. It functions in the pathway carbohydrate degradation; glycolysis; pyruvate from D-glyceraldehyde 3-phosphate: step 2/5. This Rhodococcus erythropolis (strain PR4 / NBRC 100887) protein is Phosphoglycerate kinase.